The primary structure comprises 138 residues: MRTLWIMAVLLVGVEGSLVELGKMILQETGKNPVTSYGAYGCNCGVLGRGKPKDATDRCCYVHKCCYKKLTDCNPKKDRYSYSWKDKTIVCGENNSCLKELCECDKAVAICLRENLDTYNKKYKNNYLKPFCKKADPC.

The N-terminal stretch at M1 to G16 is a signal peptide. Residue V34 participates in suramin binding. Disulfide bonds link C42–C132, C44–C60, C59–C111, C65–C138, C66–C104, C73–C97, and C91–C102. Position 43 (N43) interacts with varespladib. G45 and G48 together coordinate suramin. Residues H63 and K64 each coordinate varespladib. K85 provides a ligand contact to suramin.

The protein belongs to the phospholipase A2 family. Group II subfamily. K49 sub-subfamily. As to quaternary structure, monomer in solution. Homodimer; non-covalently linked (probable conventional/extended dimer conformation). Homotetramer (dimer of homodimer (probable conventional/extended dimer conformation)); non-covalently linked. Homooligomer. In terms of tissue distribution, expressed by the venom gland.

The protein localises to the secreted. Its activity is regulated as follows. Myotoxin activity is inhibited by suramin and varespladib. Inhibition by suramin may be caused by (i) distortion of MDiS from both monomers impairing the membrane disruption mechanism by the toxin and (ii) surface electrostatic changes of the complex that interfere with the toxin membrane dockage process (putative-MDoS is partially hidden). Inhibition by varespladib is probably through varespladib binding to MDoS. Functionally, snake venom phospholipase A2 homolog that lacks enzymatic activity. In vivo, it displays local myotoxin and edema-inducing activities and is lethal by intraperitoneal injection. The myotoxicity effect is weaker in comparison to other myotoxins, probably due to the formation of high molecular weight complexes and to the oligomeric conformation (conventional dimer). It shows specificity toward neurons and myotubes, but not on a variety of other cell types. This PLA2 excites a cohort of sensory neurons via ATP release and consequent activation of P2RX2 and/or P2RX3 purinergic receptors. Pannexin hemichannels act as downstream mediators of toxin-evoked ATP release. In vivo, it elicits nonneurogenic inflammatory pain, thermal hyperalgesia, and mechanical allodynia, of which the latter is completely dependent on purinergic signaling. The protein is Basic phospholipase A2 homolog MjTX-I of Bothrops moojeni (Lance-headed viper).